The following is a 117-amino-acid chain: Non-specific lipid-transfer protein B (117 aa).

Positions 1 to 25 (MAGLVKLSCLVLACMIVAGPIATNA) are cleaved as a signal peptide. 4 disulfide bridges follow: Cys-29/Cys-76, Cys-39/Cys-53, Cys-54/Cys-99, and Cys-74/Cys-113.

Belongs to the plant LTP family.

Functionally, plant non-specific lipid-transfer proteins transfer phospholipids as well as galactolipids across membranes. May play a role in wax or cutin deposition in the cell walls of expanding epidermal cells and certain secretory tissues. The chain is Non-specific lipid-transfer protein B (WAX9B) from Brassica oleracea var. italica (Broccoli).